Consider the following 315-residue polypeptide: 4-hydroxy-3-methylbut-2-enyl diphosphate reductase (315 aa).

Cys12 provides a ligand contact to [4Fe-4S] cluster. The (2E)-4-hydroxy-3-methylbut-2-enyl diphosphate site is built by His41 and His74. Dimethylallyl diphosphate is bound by residues His41 and His74. Residues His41 and His74 each coordinate isopentenyl diphosphate. Cys96 lines the [4Fe-4S] cluster pocket. Residue His124 coordinates (2E)-4-hydroxy-3-methylbut-2-enyl diphosphate. Position 124 (His124) interacts with dimethylallyl diphosphate. His124 is a binding site for isopentenyl diphosphate. Catalysis depends on Glu126, which acts as the Proton donor. A (2E)-4-hydroxy-3-methylbut-2-enyl diphosphate-binding site is contributed by Thr168. [4Fe-4S] cluster is bound at residue Cys198. (2E)-4-hydroxy-3-methylbut-2-enyl diphosphate-binding residues include Ser226, Ser227, Asn228, and Ser270. Residues Ser226, Ser227, Asn228, and Ser270 each contribute to the dimethylallyl diphosphate site. The isopentenyl diphosphate site is built by Ser226, Ser227, Asn228, and Ser270.

It belongs to the IspH family. The cofactor is [4Fe-4S] cluster.

It catalyses the reaction isopentenyl diphosphate + 2 oxidized [2Fe-2S]-[ferredoxin] + H2O = (2E)-4-hydroxy-3-methylbut-2-enyl diphosphate + 2 reduced [2Fe-2S]-[ferredoxin] + 2 H(+). The enzyme catalyses dimethylallyl diphosphate + 2 oxidized [2Fe-2S]-[ferredoxin] + H2O = (2E)-4-hydroxy-3-methylbut-2-enyl diphosphate + 2 reduced [2Fe-2S]-[ferredoxin] + 2 H(+). It participates in isoprenoid biosynthesis; dimethylallyl diphosphate biosynthesis; dimethylallyl diphosphate from (2E)-4-hydroxy-3-methylbutenyl diphosphate: step 1/1. The protein operates within isoprenoid biosynthesis; isopentenyl diphosphate biosynthesis via DXP pathway; isopentenyl diphosphate from 1-deoxy-D-xylulose 5-phosphate: step 6/6. Catalyzes the conversion of 1-hydroxy-2-methyl-2-(E)-butenyl 4-diphosphate (HMBPP) into a mixture of isopentenyl diphosphate (IPP) and dimethylallyl diphosphate (DMAPP). Acts in the terminal step of the DOXP/MEP pathway for isoprenoid precursor biosynthesis. This chain is 4-hydroxy-3-methylbut-2-enyl diphosphate reductase, found in Pseudomonas syringae pv. syringae (strain B728a).